The sequence spans 187 residues: Small ribosomal subunit protein uS5 (187 aa).

The region spanning 20–83 is the S5 DRBM domain; sequence FADRLVAINR…EQAKRQMIRV (64 aa). The interval 155 to 187 is disordered; the sequence is KKEQSPRSVAQRRGKKVADILPKRDEAPAEAEA. The segment covering 170-181 has biased composition (basic and acidic residues); it reads KVADILPKRDEA.

The protein belongs to the universal ribosomal protein uS5 family. Part of the 30S ribosomal subunit. Contacts proteins S4 and S8.

Its function is as follows. With S4 and S12 plays an important role in translational accuracy. Functionally, located at the back of the 30S subunit body where it stabilizes the conformation of the head with respect to the body. The protein is Small ribosomal subunit protein uS5 of Ruegeria sp. (strain TM1040) (Silicibacter sp.).